Reading from the N-terminus, the 1016-residue chain is Rho family-interacting cell polarization regulator 2 (1016 aa).

Phosphoserine is present on residues S21 and S37. Residues 44 to 73 form a disordered region; it reads AVKKPQAKLKKMHNLGHKNSSPPKEPQPKR. The span at 48-59 shows a compositional bias: basic residues; it reads PQAKLKKMHNLG. An involved in cell filopodia formation region spans residues 55-113; the sequence is MHNLGHKNSSPPKEPQPKRVEEVYRALKNGLDEYLEVHQTELDKLTTQLKDMRRNSRLG. Residues 85–112 adopt a coiled-coil conformation; that stretch reads LDEYLEVHQTELDKLTTQLKDMRRNSRL. S341 bears the Phosphoserine mark. Positions 414–428 are enriched in polar residues; that stretch reads TSTELPPGSQSSQNE. The interval 414-469 is disordered; that stretch reads TSTELPPGSQSSQNEGLKDSSSASCSSSSREGSEPRPHPEGETQGLGKPEGCPVAT. Residues 433 to 442 show a composition bias toward low complexity; it reads SSSASCSSSS. The segment covering 444-454 has biased composition (basic and acidic residues); sequence EGSEPRPHPEG. Phosphoserine occurs at positions 520 and 532. The disordered stretch occupies residues 636–656; the sequence is DSVFSDTETEKNSYRSVHPEA. The segment covering 643–656 has biased composition (basic and acidic residues); that stretch reads ETEKNSYRSVHPEA.

It belongs to the RIPOR family. Homooligomer; homooligomerization is regulated by RHOC and leads to the formation of concatemers through the association of N- and C-termini. Interacts (phosphorylated form) with 14-3-3 proteins; these interactions occur during myogenic cell differentiation and also induces T cell proliferation arrest. Interacts (phosphorylated form) with HDAC6; this interaction occurs during early myogenic differentiation, prevents HDAC6 to deacetylate tubulin and also induces T cell proliferation arrest. Interacts with DYSF; this interaction occurs during early myogenic differentiation. Interacts with MYOF. Interacts (via active GTP- or inactive GDP-bound forms) with RHOA; this interaction is direct, blocks the loading of GTP to RHOA and decreases upon chemokine CCL19 stimulation in primary T lymphocytes. Interacts with RHOC. Interacts (via phosphorylated form) with YWHAB; this interaction occurs in a chemokine-dependent manner and does not compete for binding of RIPOR2 with RHOA nor blocks inhibition of RIPOR2-mediated RHOA activity. Interacts with YWHAE. Interacts with YWHAQ. In terms of processing, phosphorylated. Chemokine-induced phosphorylation in neutrophils occurs in a PKC- and AKT-dependent manner, resulting in RIPOR2 interaction with YWHAB and stabilization. Phosphorylated by PKCA, AKT1 and MAPKAPK1A; in vitro.

It localises to the cytoplasm. Its subcellular location is the cytoskeleton. The protein resides in the cell projection. The protein localises to the filopodium. It is found in the apical cell membrane. It localises to the stereocilium. Its subcellular location is the stereocilium membrane. Functionally, acts as an inhibitor of the small GTPase RHOA and plays several roles in the regulation of myoblast and hair cell differentiation, lymphocyte T proliferation and neutrophil polarization. Plays a role in fetal mononuclear myoblast differentiation by promoting filopodia and myotube formation. Maintains naive T lymphocytes in a quiescent state and prevents chemokine-induced T lymphocyte responses, such as cell adhesion, polarization and migration. Involved also in the regulation of neutrophil polarization, chemotaxis and adhesion. Required for normal development of inner and outer hair cell stereocilia within the cochlea of the inner ear. Plays a role for maintaining the structural organization of the basal domain of stereocilia. Involved in mechanosensory hair cell function. Required for normal hearing. In Bos taurus (Bovine), this protein is Rho family-interacting cell polarization regulator 2.